A 286-amino-acid polypeptide reads, in one-letter code: Thymidylate synthase (286 aa).

A dUMP-binding site is contributed by Arg27. His57 is a (6R)-5,10-methylene-5,6,7,8-tetrahydrofolate binding site. 148 to 149 (RR) is a dUMP binding site. Cys168 (nucleophile) is an active-site residue. Residues 188-191 (RSAD), Asn199, and 229-231 (HLY) each bind dUMP. Asp191 contributes to the (6R)-5,10-methylene-5,6,7,8-tetrahydrofolate binding site. Ala285 is a binding site for (6R)-5,10-methylene-5,6,7,8-tetrahydrofolate.

It belongs to the thymidylate synthase family. Bacterial-type ThyA subfamily. In terms of assembly, homodimer.

The protein resides in the cytoplasm. The catalysed reaction is dUMP + (6R)-5,10-methylene-5,6,7,8-tetrahydrofolate = 7,8-dihydrofolate + dTMP. It participates in pyrimidine metabolism; dTTP biosynthesis. In terms of biological role, catalyzes the reductive methylation of 2'-deoxyuridine-5'-monophosphate (dUMP) to 2'-deoxythymidine-5'-monophosphate (dTMP) while utilizing 5,10-methylenetetrahydrofolate (mTHF) as the methyl donor and reductant in the reaction, yielding dihydrofolate (DHF) as a by-product. This enzymatic reaction provides an intracellular de novo source of dTMP, an essential precursor for DNA biosynthesis. The chain is Thymidylate synthase from Psychrobacter sp. (strain PRwf-1).